The chain runs to 79 residues: Sec-independent protein translocase protein TatA (79 aa).

A helical membrane pass occupies residues 1 to 21; it reads MGGFTSIWHWVIVLLVIVLLF. The disordered stretch occupies residues 48–79; that stretch reads EEEAKNEPKTLDAQVTQAKVHESSEIKNKQEG. The span at 66–79 shows a compositional bias: basic and acidic residues; the sequence is KVHESSEIKNKQEG.

This sequence belongs to the TatA/E family. As to quaternary structure, the Tat system comprises two distinct complexes: a TatABC complex, containing multiple copies of TatA, TatB and TatC subunits, and a separate TatA complex, containing only TatA subunits. Substrates initially bind to the TatABC complex, which probably triggers association of the separate TatA complex to form the active translocon.

The protein localises to the cell inner membrane. Functionally, part of the twin-arginine translocation (Tat) system that transports large folded proteins containing a characteristic twin-arginine motif in their signal peptide across membranes. TatA could form the protein-conducting channel of the Tat system. This Helicobacter acinonychis (strain Sheeba) protein is Sec-independent protein translocase protein TatA.